Here is a 245-residue protein sequence, read N- to C-terminus: 2,3-bisphosphoglycerate-dependent phosphoglycerate mutase (245 aa).

Residues 8 to 15, 21 to 22, Arg60, 87 to 90, Lys98, 114 to 115, and 183 to 184 each bind substrate; these read RHGQSLWN, TG, ERHY, RR, and GN. The active-site Tele-phosphohistidine intermediate is His9. Catalysis depends on Glu87, which acts as the Proton donor/acceptor.

The protein belongs to the phosphoglycerate mutase family. BPG-dependent PGAM subfamily.

It catalyses the reaction (2R)-2-phosphoglycerate = (2R)-3-phosphoglycerate. It functions in the pathway carbohydrate degradation; glycolysis; pyruvate from D-glyceraldehyde 3-phosphate: step 3/5. Its function is as follows. Catalyzes the interconversion of 2-phosphoglycerate and 3-phosphoglycerate. This chain is 2,3-bisphosphoglycerate-dependent phosphoglycerate mutase, found in Bacillus anthracis (strain A0248).